A 177-amino-acid chain; its full sequence is Peptide methionine sulfoxide reductase MsrA (177 aa).

The active site involves Cys-12.

It belongs to the MsrA Met sulfoxide reductase family.

It catalyses the reaction L-methionyl-[protein] + [thioredoxin]-disulfide + H2O = L-methionyl-(S)-S-oxide-[protein] + [thioredoxin]-dithiol. The catalysed reaction is [thioredoxin]-disulfide + L-methionine + H2O = L-methionine (S)-S-oxide + [thioredoxin]-dithiol. Has an important function as a repair enzyme for proteins that have been inactivated by oxidation. Catalyzes the reversible oxidation-reduction of methionine sulfoxide in proteins to methionine. This Halobacterium salinarum (strain ATCC 29341 / DSM 671 / R1) protein is Peptide methionine sulfoxide reductase MsrA.